We begin with the raw amino-acid sequence, 125 residues long: Probable 4-amino-4-deoxy-L-arabinose-phosphoundecaprenol flippase subunit ArnF (125 aa).

Topologically, residues 1 to 2 (MG) are cytoplasmic. A helical membrane pass occupies residues 3–23 (VMWGLISVAIASLAQLSLGFA). The Periplasmic segment spans residues 24 to 33 (MMRLPSIAHP). The chain crosses the membrane as a helical span at residues 34 to 54 (LAFISGLGAFNAATLALFAGL). Residues 55–76 (AGYLVSVFCWQKTLHTLALSKA) lie on the Cytoplasmic side of the membrane. Residues 77 to 97 (YALLSLSYVLVWVASMLLPGL) traverse the membrane as a helical segment. The Periplasmic portion of the chain corresponds to 98–100 (QGA). A helical membrane pass occupies residues 101–121 (FSLKAMLGVLCIMAGVMLIFL). Over 122 to 125 (PARS) the chain is Cytoplasmic.

The protein belongs to the ArnF family. In terms of assembly, heterodimer of ArnE and ArnF.

It localises to the cell inner membrane. Its pathway is bacterial outer membrane biogenesis; lipopolysaccharide biosynthesis. In terms of biological role, translocates 4-amino-4-deoxy-L-arabinose-phosphoundecaprenol (alpha-L-Ara4N-phosphoundecaprenol) from the cytoplasmic to the periplasmic side of the inner membrane. This is Probable 4-amino-4-deoxy-L-arabinose-phosphoundecaprenol flippase subunit ArnF from Salmonella choleraesuis (strain SC-B67).